The sequence spans 357 residues: Glutamine synthetase root isozyme 1 (357 aa).

The GS beta-grasp domain maps to 19–99; sequence IIAEYIWIGG…VMCDCYTPQG (81 aa). The GS catalytic domain maps to 106–357; it reads KRYSAAKVFS…AETTILWNGN (252 aa).

Belongs to the glutamine synthetase family. Homooctamer. As to expression, found mainly in the cortical tissues of seedling roots, and in the root tip.

Its subcellular location is the cytoplasm. The catalysed reaction is L-glutamate + NH4(+) + ATP = L-glutamine + ADP + phosphate + H(+). Functionally, plays a role in the flow of nitrogen into nitrogenous organic compounds. The protein is Glutamine synthetase root isozyme 1 (GLN6) of Zea mays (Maize).